Here is a 168-residue protein sequence, read N- to C-terminus: uncharacterized protein (168 aa).

2 CBS domains span residues 20–77 (IMKK…NEDL) and 117–168 (MTRK…EALI).

This is an uncharacterized protein from Methanocaldococcus jannaschii (strain ATCC 43067 / DSM 2661 / JAL-1 / JCM 10045 / NBRC 100440) (Methanococcus jannaschii).